The primary structure comprises 793 residues: Protein smoothened (793 aa).

The N-terminal stretch at 1–30 (MAAGRPVRGPELAPRRLLQLLLLVLLGGRG) is a signal peptide. The Extracellular portion of the chain corresponds to 31–237 (RGAALSGNVT…EAEHQDMHSY (207 aa)). Residues 35–61 (LSGNVTGPGPRSAGGSARRNAPVTSPP) are disordered. Asn-38 carries N-linked (GlcNAc...) asparagine glycosylation. 5 disulfides stabilise this stretch: Cys-68–Cys-182, Cys-74–Cys-138, Cys-82–Cys-131, Cys-122–Cys-158, and Cys-151–Cys-173. Positions 69 to 185 (GRAAHCEPLR…DHFPEGCPNE (117 aa)) constitute an FZ domain. Residue Asp-99 participates in cholesterol binding. Asn-192 carries N-linked (GlcNAc...) asparagine glycosylation. Disulfide bonds link Cys-197-Cys-217, Cys-221-Cys-299, and Cys-318-Cys-394. A helical transmembrane segment spans residues 238 to 258 (IAAFGAVTGLCTLFTLATFVA). The Cytoplasmic segment spans residues 259-266 (DWRNSNRY). A helical transmembrane segment spans residues 267-287 (PAVILFYVNACFFVGSIGWLA). Topologically, residues 288–318 (QFMDGARREIVCRADGTMRFGEPTSSETLSC) are extracellular. The chain crosses the membrane as a helical span at residues 319–339 (VIIFVIVYYALMAGVVWFVVL). The Cytoplasmic portion of the chain corresponds to 340 to 362 (TYAWHTSFKALGTTYQPLSGKTS). The chain crosses the membrane as a helical span at residues 363–383 (YFHLLTWSLPFVLTVAILAVA). Residues 384-406 (QVDGDSVSGICFVGYKNYRYRAG) are Extracellular-facing. Tyr-398 provides a ligand contact to cholesterol. Residues 407-427 (FVLAPIGLVLIVGGYFLIRGV) form a helical membrane-spanning segment. The Cytoplasmic segment spans residues 428-455 (MTLFSIKSNHPGLLSEKAASKINETMLR). Residues 456 to 476 (LGIFGFLAFGFVLITFSCHFY) form a helical membrane-spanning segment. The Extracellular portion of the chain corresponds to 477–528 (DFFNQAEWERSFRDYVLCQANVTIGLPTKKPIPDCEIKNRPSLLVEKINLFA). Cys-494 and Cys-511 are oxidised to a cystine. A glycan (N-linked (GlcNAc...) asparagine) is linked at Asn-497. A helical transmembrane segment spans residues 529 to 549 (MFGTGIAMSTWVWTKATLLIW). Residues 542 to 573 (TKATLLIWRRTWCRLTGHSDDEPKRIKKSKMI) are interaction with BBS5 and BBS7. Residues 550–793 (RRTWCRLTGH…AELLDADSDF (244 aa)) lie on the Cytoplasmic side of the membrane. Phosphoserine is present on residues Ser-560, Ser-578, and Ser-594. Residues 574–657 (AKAFSKRREL…TPVPPEEQAN (84 aa)) are required for interaction with PRKACA. Residues 585–597 (QNPGQELSFSMHT) are interaction with DLG5. Thr-597 carries the post-translational modification Phosphothreonine. Phosphoserine is present on residues Ser-599 and Ser-642. Phosphothreonine is present on residues Thr-644 and Thr-648. Phosphoserine is present on Ser-666. Residues 674-684 (GRKKKRRKRKK) are compositionally biased toward basic residues. Residues 674–702 (GRKKKRRKRKKEVCPLGPAPELHHSAPVP) are disordered.

Belongs to the G-protein coupled receptor Fz/Smo family. Homodimer. Interacts (via C-terminus) with protein kinase A catalytic subunit PRKACA; interacts with free PRKACA subunits and the interaction leads to sequestration of PRKACA at the membrane, preventing PRKACA-mediated phosphorylation of GLI transcription factors. Interacts with ARRB2. Interacts with KIF7. Interacts with BBS5 and BBS7; the interactions are indicative for the association of SMO with the BBsome complex to facilitate ciliary localization of SMO. Interacts with DLG5 and SDCBP. Interacts with GAS8/DRC4. Phosphorylation by GRK kinases is required for interaction with protein kinase A catalytic subunit PRKACA. In embryo, found in the early neural folds and neural tube, pre-somitic mesoderm and somites, developing limb bud, gut, eye, testes, cartilage, muscle, lung, epiglottis, thymus, tongue, jaw, taste buds, teeth, and skin. In adult, found in multiple tissues including heart, brain, liver, lung, skeletal muscle, kidney and testis.

Its subcellular location is the cell membrane. It is found in the cell projection. The protein localises to the cilium. Its function is as follows. G protein-coupled receptor which associates with the patched protein (PTCH) to transduce hedgehog protein signaling. Binding of sonic hedgehog (SHH) to its receptor patched prevents inhibition of smoothened (SMO) by patched. When active, SMO binds to and sequesters protein kinase A catalytic subunit PRKACA at the cell membrane, preventing PRKACA-mediated phosphorylation of GLI transcription factors which releases the GLI proteins from PRKACA-mediated inhibition and allows for transcriptional activation of hedgehog pathway target genes. Required for the accumulation of KIF7, GLI2 and GLI3 in the cilia. Interacts with DLG5 at the ciliary base to induce the accumulation of KIF7 and GLI2 at the ciliary tip for GLI2 activation. This chain is Protein smoothened (Smo), found in Rattus norvegicus (Rat).